Here is a 449-residue protein sequence, read N- to C-terminus: MTSSVWQERRHGEDKQRRNDHRSPYQRDRARILHSAAFRRLQAKTQVLGVGMNDFYRTRLTHSLEVSQIGTGIAAQLRRKYPQHKQLLCSMSLLESLCLAHDIGHPPFGHGGEVALNYMMRDHGGFEGNGQTFRILSKLEPYTLDFGMNLCRRTMLGILKYPAPHSKLFVAGEHNEITNHRQLKPSQWPPVKGIFDDDNDIFAWVLEPLSEADRSRFTSTQQGSHPALHHYPHLRTQFKSFDCSIMELADDIAYAVHDLEDAIVMGIVTASQWHQDVAPTLTNSGDTWIRQELADIGNKLFSHEHHLRKDAIGTLVNGFVTAIVISEDDVFEEPLLRFNATLEPEFAIALNVLKQLVYKYVIRKPEIQMLEYKGQQIVMGLFEAFASDPERLLPLNTQERWRESEQQGLNSHRVLADYISGMTDEFAGRLYQQLFSPKAGSNVELSKEM.

The interval 1–27 (MTSSVWQERRHGEDKQRRNDHRSPYQR) is disordered. Basic and acidic residues predominate over residues 7 to 27 (QERRHGEDKQRRNDHRSPYQR). The HD domain occupies 59 to 255 (RLTHSLEVSQ…MELADDIAYA (197 aa)).

This sequence belongs to the dGTPase family. Type 2 subfamily.

The chain is Deoxyguanosinetriphosphate triphosphohydrolase-like protein from Shewanella baltica (strain OS223).